We begin with the raw amino-acid sequence, 246 residues long: V-type proton ATPase subunit D 1 (246 aa).

It belongs to the V-ATPase D subunit family. In terms of assembly, V-ATPase is a heteromultimeric enzyme made up of two complexes: the ATP-hydrolytic V1 complex and the proton translocation V0 complex. The V1 complex consists of three catalytic AB heterodimers that form a heterohexamer, three peripheral stalks each consisting of EG heterodimers, one central rotor including subunits D and F, and the regulatory subunits C and H. The proton translocation complex V0 consists of the proton transport subunit a, a ring of proteolipid subunits c9c'', rotary subunit d, subunits e and f, and the accessory subunits VhaAC45 and ATP6AP2.

In terms of biological role, subunit of the V1 complex of vacuolar(H+)-ATPase (V-ATPase), a multisubunit enzyme composed of a peripheral complex (V1) that hydrolyzes ATP and a membrane integral complex (V0) that translocates protons. V-ATPase is responsible for acidifying and maintaining the pH of intracellular compartments and in some cell types, is targeted to the plasma membrane, where it is responsible for acidifying the extracellular environment. The protein is V-type proton ATPase subunit D 1 (Vha36-1) of Drosophila melanogaster (Fruit fly).